A 468-amino-acid chain; its full sequence is MAAGWAPPRLEDFILTEKLGSGSYATVYKAYRKRNAREVVAIKCVSKKSLNKAAVENLLTEIEILKTVHHPHILELKDFQWDQDYIFLITEYCAGGDLSRFIRTRRILPERIVQVFLQQLASALKFLHEKNISHLDLKPQNILLSRLDRPHLKLADFGFAQHMSSEDAPQALRGSPLYMAPEMVCSKHYDARVDLWSVGVILYEALFGKAPFASKSFSELEEKILSHKTIELPTRPRLSPECRDLLQQLLQRDPDKRISFIEFFAHLFVDLEHMPSAETLEKATRLVVEAVEKDSAGEHSAALTLYCKALEYFIPALHYESDAKRKEAMRSKVCQYISRAEELKVLVSSSNKTLLMQGISGRELLKEMAQDKPRLFSALEVASAAVAKDEEGCACDALDLYQQSLGELLLMLSAESPGRRRELLHAEIQTLMGRAEFLKEQMKTSQWKSESLGQEVLSESVRNSCSLQ.

The region spanning 13 to 269 (FILTEKLGSG…FIEFFAHLFV (257 aa)) is the Protein kinase domain. Residues 19–27 (LGSGSYATV) and Lys43 contribute to the ATP site. The active-site Proton acceptor is the Asp136. 2 consecutive MIT domains span residues 279–347 (TLEK…KVLV) and 374–442 (RLFS…KEQM).

The protein belongs to the protein kinase superfamily. Ser/Thr protein kinase family. APG1/unc-51/ULK1 subfamily.

It is found in the cytoplasm. It catalyses the reaction L-seryl-[protein] + ATP = O-phospho-L-seryl-[protein] + ADP + H(+). The catalysed reaction is L-threonyl-[protein] + ATP = O-phospho-L-threonyl-[protein] + ADP + H(+). In terms of biological role, serine/threonine protein kinase that acts as a regulator of Sonic hedgehog (SHH) signaling and autophagy. This chain is Serine/threonine-protein kinase ULK3 (ulk3), found in Xenopus laevis (African clawed frog).